We begin with the raw amino-acid sequence, 153 residues long: Xanthine-guanine phosphoribosyltransferase (153 aa).

Residues arginine 37–glycine 38, arginine 69, and aspartate 88–threonine 96 each bind 5-phospho-alpha-D-ribose 1-diphosphate. Residue arginine 69 participates in GMP binding. Aspartate 89 provides a ligand contact to Mg(2+). 2 residues coordinate guanine: aspartate 92 and isoleucine 135. Xanthine-binding residues include aspartate 92 and isoleucine 135. Residues aspartate 92–threonine 96 and tryptophan 134–isoleucine 135 each bind GMP.

The protein belongs to the purine/pyrimidine phosphoribosyltransferase family. XGPT subfamily. Homotetramer. Mg(2+) serves as cofactor.

It is found in the cell inner membrane. The catalysed reaction is GMP + diphosphate = guanine + 5-phospho-alpha-D-ribose 1-diphosphate. It carries out the reaction XMP + diphosphate = xanthine + 5-phospho-alpha-D-ribose 1-diphosphate. The enzyme catalyses IMP + diphosphate = hypoxanthine + 5-phospho-alpha-D-ribose 1-diphosphate. It participates in purine metabolism; GMP biosynthesis via salvage pathway; GMP from guanine: step 1/1. The protein operates within purine metabolism; XMP biosynthesis via salvage pathway; XMP from xanthine: step 1/1. Functionally, purine salvage pathway enzyme that catalyzes the transfer of the ribosyl-5-phosphate group from 5-phospho-alpha-D-ribose 1-diphosphate (PRPP) to the N9 position of the 6-oxopurines guanine and xanthine to form the corresponding ribonucleotides GMP (guanosine 5'-monophosphate) and XMP (xanthosine 5'-monophosphate), with the release of PPi. To a lesser extent, also acts on hypoxanthine. The chain is Xanthine-guanine phosphoribosyltransferase from Proteus mirabilis (strain HI4320).